Here is a 677-residue protein sequence, read N- to C-terminus: L-type lectin-domain containing receptor kinase IV.2 (677 aa).

The N-terminal stretch at 1–22 (MFVKLKLIFFFFLLCQIMISSS) is a signal peptide. Residues 23-291 (QNLNFTYNGF…EPRRISEFYK (269 aa)) lie on the Extracellular side of the membrane. A legume-lectin like region spans residues 24–262 (NLNFTYNGFH…EHFLVGWSFR (239 aa)). N-linked (GlcNAc...) asparagine glycans are attached at residues Asn-26, Asn-57, Asn-81, Asn-128, Asn-134, Asn-171, Asn-186, and Asn-203. The chain crosses the membrane as a helical span at residues 292–312 (IGMPLISLSLIFSIIFLAFYI). The Cytoplasmic portion of the chain corresponds to 313–677 (VRRKKKYEEE…IADSLLSGGR (365 aa)). A Protein kinase domain is found at 347-625 (FKEKDLLGSG…LQYLRGDMAL (279 aa)). ATP is bound by residues 353 to 361 (LGSGGFGRV) and Lys-376. Asp-472 functions as the Proton acceptor in the catalytic mechanism.

It in the C-terminal section; belongs to the protein kinase superfamily. Ser/Thr protein kinase family. In the N-terminal section; belongs to the leguminous lectin family.

The protein resides in the cell membrane. It carries out the reaction L-seryl-[protein] + ATP = O-phospho-L-seryl-[protein] + ADP + H(+). The enzyme catalyses L-threonyl-[protein] + ATP = O-phospho-L-threonyl-[protein] + ADP + H(+). Its function is as follows. Required during pollen development. Functionally, involved in resistance response to the pathogenic bacteria Pseudomonas syringae. This is L-type lectin-domain containing receptor kinase IV.2 from Arabidopsis thaliana (Mouse-ear cress).